Reading from the N-terminus, the 115-residue chain is Large ribosomal subunit protein bL19 (115 aa).

The protein belongs to the bacterial ribosomal protein bL19 family.

Functionally, this protein is located at the 30S-50S ribosomal subunit interface and may play a role in the structure and function of the aminoacyl-tRNA binding site. This chain is Large ribosomal subunit protein bL19, found in Fervidobacterium nodosum (strain ATCC 35602 / DSM 5306 / Rt17-B1).